The chain runs to 2344 residues: Pecanex-like protein 1 (2344 aa).

The next 2 membrane-spanning stretches (helical) occupy residues A33–L53 and M57–V77. 4 disordered regions span residues Q101–R163, S271–A290, Q306–R692, and V749–R837. The segment covering S143–R163 has biased composition (polar residues). The segment covering H272–G282 has biased composition (basic residues). Residues R328–P343 show a composition bias toward polar residues. A compositionally biased stretch (low complexity) spans S372–G390. Residues N396–Q406 show a composition bias toward polar residues. Basic and acidic residues-rich tracts occupy residues L416 to A458, R508 to E522, and R531 to P547. The segment covering T557–A572 has biased composition (basic residues). Over residues S616–S638 the composition is skewed to low complexity. Residues V749–S758 are compositionally biased toward polar residues. Low complexity-rich tracts occupy residues A770–A781 and L817–Q835. 3 consecutive transmembrane segments (helical) span residues I1010–G1030, I1035–V1055, and I1069–D1089. A glycan (N-linked (GlcNAc...) asparagine) is linked at N1094. The chain crosses the membrane as a helical span at residues L1119 to V1139. A glycan (N-linked (GlcNAc...) asparagine) is linked at N1158. 4 consecutive transmembrane segments (helical) span residues L1163–L1183, H1196–S1216, L1269–T1289, and Y1297–V1317. N-linked (GlcNAc...) asparagine glycosylation is found at N1582, N1723, N1985, and N2075. Positions E2051–R2123 are disordered. Composition is skewed to polar residues over residues C2061 to T2081 and P2095 to R2118. N-linked (GlcNAc...) asparagine glycosylation is found at N2231, N2237, and N2263.

Belongs to the pecanex family.

The protein localises to the membrane. The protein is Pecanex-like protein 1 of Mus musculus (Mouse).